A 353-amino-acid polypeptide reads, in one-letter code: Photosystem II protein D1 (353 aa).

Thr2 carries the N-acetylthreonine modification. Thr2 carries the phosphothreonine modification. 3 helical membrane-spanning segments follow: residues 29-46 (YIGW…TATS), 118-133 (HFLL…EWEL), and 142-156 (WIAV…AAAA). Residue His118 coordinates chlorophyll a. Residue Tyr126 participates in pheophytin a binding. 2 residues coordinate [CaMn4O5] cluster: Asp170 and Glu189. The chain crosses the membrane as a helical span at residues 197–218 (FHMLGVAGVFGGSLFSAMHGSL). Residue His198 coordinates chlorophyll a. A quinone is bound by residues His215 and 264–265 (SF). Residue His215 coordinates Fe cation. Position 272 (His272) interacts with Fe cation. Residues 274–288 (FLAAWPVVGIWFTAL) traverse the membrane as a helical segment. [CaMn4O5] cluster is bound by residues His332, Glu333, Asp342, and Ala344. A propeptide spanning residues 345–353 (SVDAPSING) is cleaved from the precursor.

It belongs to the reaction center PufL/M/PsbA/D family. PSII is composed of 1 copy each of membrane proteins PsbA, PsbB, PsbC, PsbD, PsbE, PsbF, PsbH, PsbI, PsbJ, PsbK, PsbL, PsbM, PsbT, PsbX, PsbY, PsbZ, Psb30/Ycf12, at least 3 peripheral proteins of the oxygen-evolving complex and a large number of cofactors. It forms dimeric complexes. The D1/D2 heterodimer binds P680, chlorophylls that are the primary electron donor of PSII, and subsequent electron acceptors. It shares a non-heme iron and each subunit binds pheophytin, quinone, additional chlorophylls, carotenoids and lipids. D1 provides most of the ligands for the Mn4-Ca-O5 cluster of the oxygen-evolving complex (OEC). There is also a Cl(-1) ion associated with D1 and D2, which is required for oxygen evolution. The PSII complex binds additional chlorophylls, carotenoids and specific lipids. serves as cofactor. Post-translationally, tyr-161 forms a radical intermediate that is referred to as redox-active TyrZ, YZ or Y-Z. In terms of processing, C-terminally processed by CTPA; processing is essential to allow assembly of the oxygen-evolving complex and thus photosynthetic growth.

The protein resides in the plastid. It is found in the chloroplast thylakoid membrane. It carries out the reaction 2 a plastoquinone + 4 hnu + 2 H2O = 2 a plastoquinol + O2. Its function is as follows. Photosystem II (PSII) is a light-driven water:plastoquinone oxidoreductase that uses light energy to abstract electrons from H(2)O, generating O(2) and a proton gradient subsequently used for ATP formation. It consists of a core antenna complex that captures photons, and an electron transfer chain that converts photonic excitation into a charge separation. The D1/D2 (PsbA/PsbD) reaction center heterodimer binds P680, the primary electron donor of PSII as well as several subsequent electron acceptors. The chain is Photosystem II protein D1 from Adiantum capillus-veneris (Maidenhair fern).